Reading from the N-terminus, the 213-residue chain is NADH-quinone oxidoreductase subunit I (213 aa).

4Fe-4S ferredoxin-type domains follow at residues 74 to 103 and 113 to 142; these read RFIE…METS and GNYS…HGTE. [4Fe-4S] cluster-binding residues include C83, C86, C89, C93, C122, C125, C128, and C132.

Belongs to the complex I 23 kDa subunit family. NDH-1 is composed of 14 different subunits. Subunits NuoA, H, J, K, L, M, N constitute the membrane sector of the complex. [4Fe-4S] cluster is required as a cofactor.

The protein localises to the cell inner membrane. It carries out the reaction a quinone + NADH + 5 H(+)(in) = a quinol + NAD(+) + 4 H(+)(out). Functionally, NDH-1 shuttles electrons from NADH, via FMN and iron-sulfur (Fe-S) centers, to quinones in the respiratory chain. The immediate electron acceptor for the enzyme in this species is believed to be ubiquinone. Couples the redox reaction to proton translocation (for every two electrons transferred, four hydrogen ions are translocated across the cytoplasmic membrane), and thus conserves the redox energy in a proton gradient. In Campylobacter jejuni subsp. jejuni serotype O:6 (strain 81116 / NCTC 11828), this protein is NADH-quinone oxidoreductase subunit I.